The primary structure comprises 403 residues: Dual-specificity RNA methyltransferase RlmN (403 aa).

E126 (proton acceptor) is an active-site residue. Positions 132–375 (ETDRGTLCVS…VRTPRGRDIL (244 aa)) constitute a Radical SAM core domain. A disulfide bond links C139 and C378. [4Fe-4S] cluster-binding residues include C146, C150, and C153. S-adenosyl-L-methionine contacts are provided by residues 204-205 (GE), S236, 258-260 (SLH), and N335. The active-site S-methylcysteine intermediate is C378.

It belongs to the radical SAM superfamily. RlmN family. The cofactor is [4Fe-4S] cluster.

It is found in the cytoplasm. The enzyme catalyses adenosine(2503) in 23S rRNA + 2 reduced [2Fe-2S]-[ferredoxin] + 2 S-adenosyl-L-methionine = 2-methyladenosine(2503) in 23S rRNA + 5'-deoxyadenosine + L-methionine + 2 oxidized [2Fe-2S]-[ferredoxin] + S-adenosyl-L-homocysteine. The catalysed reaction is adenosine(37) in tRNA + 2 reduced [2Fe-2S]-[ferredoxin] + 2 S-adenosyl-L-methionine = 2-methyladenosine(37) in tRNA + 5'-deoxyadenosine + L-methionine + 2 oxidized [2Fe-2S]-[ferredoxin] + S-adenosyl-L-homocysteine. In terms of biological role, specifically methylates position 2 of adenine 2503 in 23S rRNA and position 2 of adenine 37 in tRNAs. m2A2503 modification seems to play a crucial role in the proofreading step occurring at the peptidyl transferase center and thus would serve to optimize ribosomal fidelity. The sequence is that of Dual-specificity RNA methyltransferase RlmN from Bradyrhizobium sp. (strain ORS 278).